The sequence spans 214 residues: NAD(P)H-quinone oxidoreductase subunit 6, chloroplastic (214 aa).

The next 5 membrane-spanning stretches (helical) occupy residues 10–30 (FSLF…VLLP), 32–52 (ILYS…IYLL), 61–81 (AQVL…IMLV), 102–122 (IIGL…VTTP), and 163–183 (LLPF…AIVI).

Belongs to the complex I subunit 6 family. NDH is composed of at least 16 different subunits, 5 of which are encoded in the nucleus.

It localises to the plastid. The protein localises to the chloroplast thylakoid membrane. The enzyme catalyses a plastoquinone + NADH + (n+1) H(+)(in) = a plastoquinol + NAD(+) + n H(+)(out). It carries out the reaction a plastoquinone + NADPH + (n+1) H(+)(in) = a plastoquinol + NADP(+) + n H(+)(out). NDH shuttles electrons from NAD(P)H:plastoquinone, via FMN and iron-sulfur (Fe-S) centers, to quinones in the photosynthetic chain and possibly in a chloroplast respiratory chain. The immediate electron acceptor for the enzyme in this species is believed to be plastoquinone. Couples the redox reaction to proton translocation, and thus conserves the redox energy in a proton gradient. This chain is NAD(P)H-quinone oxidoreductase subunit 6, chloroplastic (ndhG), found in Chlorokybus atmophyticus (Soil alga).